Consider the following 422-residue polypeptide: Glycerol-3-phosphate dehydrogenase [NAD(+)] 2 (422 aa).

Residues 69 to 74 (GSGNWG), F157, K180, and A213 contribute to the NAD(+) site. Substrate is bound at residue K180. The active-site Proton acceptor is the K273. 2 residues coordinate NAD(+): R338 and Q367. A substrate-binding site is contributed by 338 to 339 (RN).

It belongs to the NAD-dependent glycerol-3-phosphate dehydrogenase family.

It catalyses the reaction sn-glycerol 3-phosphate + NAD(+) = dihydroxyacetone phosphate + NADH + H(+). In Candida glabrata (strain ATCC 2001 / BCRC 20586 / JCM 3761 / NBRC 0622 / NRRL Y-65 / CBS 138) (Yeast), this protein is Glycerol-3-phosphate dehydrogenase [NAD(+)] 2 (GPD2).